A 91-amino-acid polypeptide reads, in one-letter code: Glycophorin-B (91 aa).

Residues 1-19 (MYGKIIFVLLLSEIVSISA) form the signal peptide. Topologically, residues 20–59 (LSTTEVAMHTSTSSSVTKSYISSQTNGETGQLVHRFTVPA) are extracellular. O-linked (GalNAc...) threonine glycosylation is present at T36. The O-linked (GalNAc...) serine glycan is linked to S38. The helical transmembrane segment at 60-81 (PVVIILIILCVMAGIIGTILLI) threads the bilayer. Residues 82-91 (SYSIRRLIKA) lie on the Cytoplasmic side of the membrane.

Belongs to the glycophorin-A family. As to quaternary structure, component of the ankyrin-1 complex in the erythrocyte, composed of ANK1, RHCE, RHAG, SLC4A1, EPB42, GYPA, GYPB and AQP1. Interacts (via the N-terminal) with RHAG; this interaction bridges the (RHAG)2(RHCE) heterotrimer with the SLC4A1 Band 3 I dimer complexed with GYPA. The N-terminal extracellular domain is heavily glycosylated on serine and threonine residues.

It is found in the cell membrane. Its function is as follows. Component of the ankyrin-1 complex, a multiprotein complex involved in the stability and shape of the erythrocyte membrane. This Homo sapiens (Human) protein is Glycophorin-B.